Reading from the N-terminus, the 1879-residue chain is MAQTLSKISNKENASVGLWPKRFKPHQPTPTWMVRCGPLDHDSRHGRDPVRASPQAKRVRTPNPYPRHLKPAASAVVRSGTNPSHLKPTSTDVVRSGPETPCCEAKDGGVVRSCKTCNLKPAHDSKAVSFFPAQTDGLTGDEPEFIAEACPSCVLYDTCPNCTSRAINDDGSTDGTIPSWDQIETTPAFLSLLSNTDEEMSADELTNLAAHLRKAFETGSHPPNVDYSKDQLQGLLEMAEAALPPARRQTLPFYQQRLEARRTWREKIFNLPLDELSKILTTSKDRFQRCAAWKVVLEKAVLAKEYGEEAYAYAQEALKNINSFDVNLVLKMAAGTFIGHLRMMTVDNPDMVSYLPKLIVKLKPLTLKMIIDNHENTKEGWLVTLTSLAELYGMVEVAIDFVPTVIGNLFDLLMKTTSKVYSMFKSVILATFTSESLDFTNPFWYAIAAILCFLITGAIPHNGKMKIIKNILSNATGIVAGVKAIQTLGAMFSTWSNERLVNDLSSRTIAITELNNPTITADIDAVINLQRLAETLREEVKSHTLNPLMQPYTPILRNLMSALDNVISCCTRRKAIATKRTAPVAVILTGPPGCGKTTAAFALAKRLSQQKPSIISLDVDHHDTYTGNEVCIIDEFDSSDKVDYANFVVNMVNTNPMVLNCDLVENKGKTFRSKYVIMKSNSETPVKPTSRRAGAFYRRVMIVDVKNTAVENWKRENPGKPVPKWCFNKDFSHLHLSMRGTEAYWREYVLDPTGRNHQSQKAPPDQHVTLEQLDQKMVVQHTTNTSEFVTQAGEVPVFGFVCQNNEIDTVYNLLAAVKARYGANFNLYKGMTRTAHENSGCGAHVHVISREDNFRGKAFTVNRSRLESVPHLEGDSFRRSLGVVMSDKDVTTMFYYIKGKVINDQVNLTELPANQHVVTVHTVYDMAWALRRHLKWTGQWQLIKAAYEIMCYPDTAACALRNWMDSTDFSEEHVVTQFIAPGGTIILESCYGARMWATGQRLIRAGGLTEAGGPQGGVRFAGLGARNVPWSEILREFMTLISHIWSQIKGATVVLTALTFYLKRFRPRVEAKGKNKNKGPRKNTGVALTDDEYDEWRQYKAEKKLDLTVEDFLQLRHRAAMGADDTDAVKFRCWYSERQRNYHDLEDVTIIGRGGVKRELIRKGPLRPRGNDFYDEPDDWYSEGVIDGVTHKNAIVSVDDVDGMHKGYALHIGHGVYMSLKHVVSGNAKILSEEPKNLTFNGELATFRLNTTLPTAAPVGTSKPIKDPWGNPVSTDWQFKNYNTTSGNIYGACGSSCSLTRQGDCGLPYVDDHGVVVGLHAGSGGDKCPSRKLIVPYVKVDMRIRDTCTKEYYKDNVPMISYKGLLVKETGEPRTIMKGTRLHVSPAHTDDYEECTHQPASLGAGDPRCPMSLTGIMVNNLQPYTEAPRTDTATLNRVTKMLISHMEGYVPKIHKTEEDMISAFYMLNHDTSCGPYIGGRKKDHVKDGVLDKNLLDLLSSKWNRAKCGLALPHEYALGLKDELRPKDKVAVGKRRLIWGCDVGVSTVCRAAFKRVSESIMANHALGFIQVGINMDGPAVEDPFKRLERPKHDRYCVDYSKWDSTQPPKVTSQSIDILRHFTDKSPIVDSACATLKSNPIGIFNGVAFKVAGGLPSGMPLTSIINSLNHCLMVGSAVVKALEDSGVQVTWNIFDSMDLFTYGDDGVYIVPPLISSVMPKVFSNLRQFGLKPTRTDKTDAEITPIPADEPVEFLKRTIVRTENGVRALLDKSSIIRQFYYIKAENTENWTVPPKKIDTSSRGQQLYNAGLYASQHGEEFYTNKIIPLVQRAIEFEGLHIEVPEFHQAVQAYNGYFNGTEDQPSQIALASGGTGFGGEVFEN.

A disordered region spans residues 37–98 (GPLDHDSRHG…TSTDVVRSGP (62 aa)). A compositionally biased stretch (basic and acidic residues) spans 38–50 (PLDHDSRHGRDPV). The span at 79 to 93 (SGTNPSHLKPTSTDV) shows a compositional bias: polar residues. The 157-residue stretch at 564 to 720 (DNVISCCTRR…ENWKRENPGK (157 aa)) folds into the SF3 helicase domain. Residue 590 to 597 (GPPGCGKT) participates in ATP binding. Y1093 carries the post-translational modification O-(5'-phospho-RNA)-tyrosine. Positions 1188–1341 (GVTHKNAIVS…KLIVPYVKVD (154 aa)) constitute a Peptidase C24 domain. Residues H1222, E1243, and C1305 each act as for 3CLpro activity in the active site. A RdRp catalytic domain is found at 1591-1716 (HDRYCVDYSK…IVPPLISSVM (126 aa)).

Homodimer. Interacts with NTPase, protein p30 and protease-polymerase p76. In terms of assembly, interacts with capsid protein VP1 and protease-polymerase p76. Interacts with host IEF4e; this interaction plays a role in translation of viral proteins. As to quaternary structure, homooligomer. Interacts with Vpg, protein p32 and may interact with capsid protein VP1. Post-translationally, specific enzymatic cleavages in vivo yield mature proteins. Pro-Pol is first autocatalytically cleaved, then processes the whole polyprotein. In terms of processing, VPg is uridylylated by the polymerase and is covalently attached to the 5'-end of the polyadenylated genomic and subgenomic RNAs. This uridylylated form acts as a nucleotide-peptide primer for the polymerase.

Its subcellular location is the host endoplasmic reticulum membrane. The catalysed reaction is a ribonucleoside 5'-triphosphate + H2O = a ribonucleoside 5'-diphosphate + phosphate + H(+). It carries out the reaction RNA(n) + a ribonucleoside 5'-triphosphate = RNA(n+1) + diphosphate. It catalyses the reaction Endopeptidase with a preference for cleavage when the P1 position is occupied by Glu-|-Xaa and the P1' position is occupied by Gly-|-Yaa.. In terms of biological role, together with NTPase and NS4, initiates the formation of the replication complex. Induces the proliferation of the host smooth ER membranes forming long tubular structures. These remodeled membranes probably form the viral factories that contain the replication complex. Functionally, displays NTPase activity, but no helicase activity. Induces the formation of convoluted membranes derived from the host ER. These remodeled membranes probably form the viral factories that contain the replication complex. Together with NS2 and NS4, initiates the formation of the replication complex. Probable key protein responsible for the formation of membrane alterations by the virus. Induces the formation of convoluted membranes derived from the host ER. These remodeled membranes probably form the viral factories that contain the replication complex. Together with NS2 and NTPase, initiates the formation of the replication complex. Its function is as follows. Viral genome-linked protein is covalently linked to the 5'-end of the positive-strand, negative-strand genomic RNAs and subgenomic RNA. Acts as a genome-linked replication primer. May recruit ribosome to viral RNA thereby promoting viral proteins translation. Interacts with host translation initiation complex to allow the translation of viral proteins. In terms of biological role, protease-polymerase p76 processes the polyprotein: Pro-Pol is first released by autocleavage, then all other proteins are cleaved. Cleaves host translation initiation factor eIF4G1, eIF4G2 and PABP1 thereby inducing a shutdown of host protein synthesis. This shutdown may not prevent viral mRNA from being translated since viral Vpg replaces the cap. Also functions as an RNA-directed RNA polymerase, which replicates genomic and antigenomic viral RNA by recognizing specific signals. Also transcribes a subgenomic mRNA by initiating RNA synthesis internally on antigenomic RNA. This sgRNA codes for structural proteins. Catalyzes the covalent attachment VPg with viral RNAs. In Otariidae (fur seals &amp; sea lions), this protein is Genome polyprotein.